The primary structure comprises 133 residues: Interleukin-4 (133 aa).

Positions 1–24 (MGLTYQLIPALVCLLAFTSTFVHG) are cleaved as a signal peptide. Residues Asn28, Asn45, Asn62, Asn84, Asn96, and Asn102 are each glycosylated (N-linked (GlcNAc...) asparagine). 2 disulfides stabilise this stretch: Cys48-Cys85 and Cys70-Cys113.

The protein belongs to the IL-4/IL-13 family.

The protein localises to the secreted. Its function is as follows. Participates in at least several B-cell activation processes as well as of other cell types. It is a costimulator of DNA-synthesis. It induces the expression of class II MHC molecules on resting B-cells. It enhances both secretion and cell surface expression of IgE and IgG1. It also regulates the expression of the low affinity Fc receptor for IgE (CD23) on both lymphocytes and monocytes. Positively regulates IL31RA expression in macrophages. Stimulates autophagy in dendritic cells by interfering with mTORC1 signaling and through the induction of RUFY4. This Felis catus (Cat) protein is Interleukin-4 (IL4).